A 143-amino-acid polypeptide reads, in one-letter code: Ribosome-binding factor A (143 aa).

A disordered region spans residues Asp-123–Arg-143.

This sequence belongs to the RbfA family. In terms of assembly, monomer. Binds 30S ribosomal subunits, but not 50S ribosomal subunits or 70S ribosomes.

The protein resides in the cytoplasm. Functionally, one of several proteins that assist in the late maturation steps of the functional core of the 30S ribosomal subunit. Associates with free 30S ribosomal subunits (but not with 30S subunits that are part of 70S ribosomes or polysomes). Required for efficient processing of 16S rRNA. May interact with the 5'-terminal helix region of 16S rRNA. This is Ribosome-binding factor A from Francisella tularensis subsp. mediasiatica (strain FSC147).